We begin with the raw amino-acid sequence, 732 residues long: E3 ubiquitin-protein ligase hel2 (732 aa).

Residues Met1–Lys48 are disordered. Residues Asn10–Asn21 are compositionally biased toward basic and acidic residues. The RING-type zinc finger occupies Cys81–Lys121. An LIM zinc-binding domain is found at Pro245–Val315. Disordered regions lie at residues Ile345–Ala380, Asp411–Gln501, and His623–Gly732. Composition is skewed to polar residues over residues Ser366–Ala380 and Thr415–Ile433. A compositionally biased stretch (low complexity) spans Ser457 to Pro468. Ser482 carries the post-translational modification Phosphoserine. 2 stretches are compositionally biased toward polar residues: residues Pro490–Gln501 and Ser629–Ser654. Residues Ser701 to Thr713 show a composition bias toward low complexity.

This sequence belongs to the ZNF598/HEL2 family.

The protein localises to the cytoplasm. It catalyses the reaction S-ubiquitinyl-[E2 ubiquitin-conjugating enzyme]-L-cysteine + [acceptor protein]-L-lysine = [E2 ubiquitin-conjugating enzyme]-L-cysteine + N(6)-ubiquitinyl-[acceptor protein]-L-lysine.. It functions in the pathway protein modification; protein ubiquitination. Functionally, E3 ubiquitin-protein ligase that plays a key role in the ribosome quality control (RQC), a pathway that takes place when a ribosome has stalled during translation, leading to degradation of nascent peptide chains. Activated when ribosomes are stalled within an mRNA following translation of prematurely polyadenylated mRNAs. Acts as a ribosome collision sensor: specifically recognizes and binds collided ribosome and ubiquitinates the 40S ribosomal proteins rps20/uS10 and rps3/uS3. Catalyzes 'Lys-63'-linked polyubiquitination of rps20/uS10, promoting recruitment of the RQT (ribosome quality control trigger) complex, which drives the disassembly of stalled ribosomes, followed by degradation of nascent peptides. This Schizosaccharomyces pombe (strain 972 / ATCC 24843) (Fission yeast) protein is E3 ubiquitin-protein ligase hel2.